We begin with the raw amino-acid sequence, 125 residues long: uncharacterized protein (125 aa).

This is an uncharacterized protein from Mycobacterium bovis (strain ATCC BAA-935 / AF2122/97).